Reading from the N-terminus, the 490-residue chain is MVTSPPTSSPSQRSYSPQDWLRGYQSQPQEWDYWVEDVEGSIPPDLQGTLYRNGPGLLEIGDRPLKHPFDGDGMVTAFKFPGDGRVHFQSKFVRTQGYVEEQKAGKMIYRGVFGSQPAGGWLKTIFDLRLKNIANTNITYWGDRLLALWEGGQPHRLEPSNLATIGLDDLGGILAEGQPLSAHPRIDPASTFDGGQPCYVTFSIKSSLSSTLTLLELDPQGKLLRQKTETFPGFAFIHDFAITPHYAIFLQNNVTLNGLPYLFGLRGAGECVQFHPDKPAQIILVPRDGGEIKRIPVQAGFVFHHANAFEENGKIILDSICYNSLPQVDTDGDFRSTNFDNLDPGQLWRFTIDPAAATVEKQLMVSRCCEFPVVHPQQVGRPYRYVYMGAAHHSTGNAPLQAILKVDLESGTETLRSFAPHGFAGEPIFVPRPGGVAEDDGWLLCLIYKADLHRSELVILDAQDITAPAIATLKLKHHIPYPLHGSWAQT.

Histidine 183 serves as a coordination point for Fe cation. Serine 206 serves as a coordination point for substrate. Histidine 238 provides a ligand contact to Fe cation. Phenylalanine 303 serves as a coordination point for substrate. Residues histidine 304 and histidine 484 each coordinate Fe cation.

This sequence belongs to the carotenoid oxygenase family. Fe(2+) serves as cofactor.

The enzyme catalyses all-trans-8'-apo-beta-carotenal + O2 = (2E,4E,6E)-2,6-dimethylocta-2,4,6-trienedial + all-trans-retinal. Its function is as follows. Cleaves a number of carotenals and carotenols in the all-trans configuration at the 15-15' double bond producing retinal or retinol, respectively. Also shows activity toward lycopenals and the corresponding alcohols. Does not cleave beta-carotene or lycopene. The protein is Apocarotenoid-15,15'-oxygenase of Synechocystis sp. (strain ATCC 27184 / PCC 6803 / Kazusa).